Consider the following 885-residue polypeptide: Translation initiation factor IF-2 (885 aa).

Disordered stretches follow at residues 135–159 (KAKA…AAAE) and 184–289 (QAEA…PESM). Positions 184–232 (QAEATKRKQDEEAAKAAEKARLLAEENSKRWAEEERQRLEAERYSDHHI) are enriched in basic and acidic residues. The span at 253–266 (GRRARNKNTAKSKR) shows a compositional bias: basic residues. Positions 267 to 276 (GGKDARDGRE) are enriched in basic and acidic residues. In terms of domain architecture, tr-type G spans 385–554 (PRAPVVTIMG…LLQAEVLELK (170 aa)). Residues 394 to 401 (GHVDHGKT) are G1. Residue 394 to 401 (GHVDHGKT) participates in GTP binding. Residues 419–423 (GITQH) form a G2 region. The tract at residues 440–443 (DTPG) is G3. GTP-binding positions include 440-444 (DTPGH) and 494-497 (NKMD). The interval 494 to 497 (NKMD) is G4. The segment at 530-532 (SAK) is G5.

It belongs to the TRAFAC class translation factor GTPase superfamily. Classic translation factor GTPase family. IF-2 subfamily.

The protein resides in the cytoplasm. In terms of biological role, one of the essential components for the initiation of protein synthesis. Protects formylmethionyl-tRNA from spontaneous hydrolysis and promotes its binding to the 30S ribosomal subunits. Also involved in the hydrolysis of GTP during the formation of the 70S ribosomal complex. The chain is Translation initiation factor IF-2 from Shewanella sp. (strain MR-7).